Consider the following 309-residue polypeptide: Dihydroorotate dehydrogenase B (NAD(+)), catalytic subunit (309 aa).

Residues Ser-21 and 45 to 46 (KA) each bind FMN. Substrate contacts are provided by residues Lys-45 and 69–73 (NAIGL). 2 residues coordinate FMN: Asn-99 and Asn-127. Substrate is bound at residue Asn-127. The active-site Nucleophile is the Cys-130. 2 residues coordinate FMN: Lys-165 and Ile-191. Residue 192–193 (NT) participates in substrate binding. FMN-binding positions include Gly-217, 243–244 (GG), and 265–266 (GT).

It belongs to the dihydroorotate dehydrogenase family. Type 1 subfamily. As to quaternary structure, heterotetramer of 2 PyrK and 2 PyrD type B subunits. FMN is required as a cofactor.

It is found in the cytoplasm. The enzyme catalyses (S)-dihydroorotate + NAD(+) = orotate + NADH + H(+). Its pathway is pyrimidine metabolism; UMP biosynthesis via de novo pathway; orotate from (S)-dihydroorotate (NAD(+) route): step 1/1. Catalyzes the conversion of dihydroorotate to orotate with NAD(+) as electron acceptor. In Bacillus mycoides (strain KBAB4) (Bacillus weihenstephanensis), this protein is Dihydroorotate dehydrogenase B (NAD(+)), catalytic subunit (pyrD).